Reading from the N-terminus, the 62-residue chain is Large ribosomal subunit protein bL28 (62 aa).

The disordered stretch occupies residues 1-22 (MAKKCAISGKGPMSGNNVSHAK).

It belongs to the bacterial ribosomal protein bL28 family.

The protein is Large ribosomal subunit protein bL28 of Sulfurimonas denitrificans (strain ATCC 33889 / DSM 1251) (Thiomicrospira denitrificans (strain ATCC 33889 / DSM 1251)).